Here is a 453-residue protein sequence, read N- to C-terminus: GTPase Der (453 aa).

2 EngA-type G domains span residues 4-169 and 178-353; these read PIVA…PPAD and IGVA…EQHR. GTP contacts are provided by residues 10-17, 57-61, 120-123, 184-191, 231-235, and 296-299; these read GRPNVGKS, DTGGL, NKCE, DTAGI, and NKWD. A KH-like domain is found at 354–439; the sequence is RRVGTSVINE…PIRLFWRGKK (86 aa).

It belongs to the TRAFAC class TrmE-Era-EngA-EngB-Septin-like GTPase superfamily. EngA (Der) GTPase family. In terms of assembly, associates with the 50S ribosomal subunit.

GTPase that plays an essential role in the late steps of ribosome biogenesis. The protein is GTPase Der of Synechococcus sp. (strain ATCC 27144 / PCC 6301 / SAUG 1402/1) (Anacystis nidulans).